A 1980-amino-acid polypeptide reads, in one-letter code: Unconventional myosin-IXb (1980 aa).

Position 2 is an N-acetylserine (Ser-2). In terms of domain architecture, Ras-associating spans 15–114 (ATFHLHIYPQ…YYFLLQERNA (100 aa)). The Myosin motor domain maps to 146–954 (ADFDDLCNLP…ERQALQERLH (809 aa)). 239-246 (GESGSGKT) lines the ATP pocket. Residues 715–736 (GVSSPVTRSHVEELPRGANTPS) are disordered. A phosphoserine mark is found at Ser-717 and Ser-718. An actin-binding region spans residues 845-856 (KAEPFFIRCIRS). The neck or regulatory domain stretch occupies residues 941–1045 (LKETERQALQ…CRGHLQRRSF (105 aa)). 4 IQ domains span residues 958-978 (LRRI…RHFV), 981-1001 (KHAA…RTLE), 1002-1024 (RTRA…AYHH), and 1025-1054 (QRHS…EKQK). Ser-1046 is subject to Phosphoserine. A tail region spans residues 1046–1980 (SQMMLEKQKA…ERAVRGAAEE (935 aa)). 3 disordered regions span residues 1049 to 1281 (MLEK…HPDT), 1302 to 1380 (SQSL…QGDS), and 1394 to 1449 (DKKP…NRKV). Polar residues predominate over residues 1097–1106 (TWMNSKSPNG). 3 positions are modified to phosphoserine: Ser-1108, Ser-1115, and Ser-1177. Basic and acidic residues-rich tracts occupy residues 1129-1177 (ESHE…RKAS) and 1186-1195 (EDTKEPREDG). A phosphoserine mark is found at Ser-1220, Ser-1222, Ser-1229, Ser-1237, Ser-1243, and Ser-1247. Residues 1235 to 1247 (RVSPVLPSSSLES) are compositionally biased toward low complexity. The span at 1250 to 1265 (DEDKGENSTKVQDKPE) shows a compositional bias: basic and acidic residues. Residues Ser-1266, Ser-1268, and Ser-1304 each carry the phosphoserine modification. Thr-1319 is subject to Phosphothreonine. Ser-1327, Ser-1329, and Ser-1337 each carry phosphoserine. A compositionally biased stretch (polar residues) spans 1327 to 1344 (SFSTSDVSKLSPVKTSTE). The Phorbol-ester/DAG-type zinc finger occupies 1592–1641 (GHVFASYQVNIPQSCEQCLSYIWLMDKALLCSVCKMTCHKKCVHKIQSYC). Residue Ser-1649 is modified to Phosphoserine. A Rho-GAP domain is found at 1663 to 1848 (DSLTSDKASV…MLIKEQMRKY (186 aa)). Residues 1699-1704 (AANRTR) are interaction with RHOA. Residues 1841 to 1861 (IKEQMRKYKVKMEEINHLEAA) are a coiled coil. At Ser-1886 the chain carries Phosphoserine. The disordered stretch occupies residues 1891-1923 (VRTKSPRTPVVQDLEELGALPEEAAGGDEDREK). Residues 1918–1948 (DEDREKEILMERIQSIKEEKEDITYRLPELD) are a coiled coil. Phosphoserine occurs at positions 1932, 1952, and 1959. Residues 1937 to 1953 (KEDITYRLPELDPRGSD) show a composition bias toward basic and acidic residues. Positions 1937–1980 (KEDITYRLPELDPRGSDEENLDSETSASTESLLEERAVRGAAEE) are disordered. Thr-1965 bears the Phosphothreonine mark. Over residues 1969–1980 (LEERAVRGAAEE) the composition is skewed to basic and acidic residues.

Belongs to the TRAFAC class myosin-kinesin ATPase superfamily. Myosin family. As to quaternary structure, interacts (via IQ domains) with CALM. Interacts with RHOA. Interacts (via Rho-GAP domain) with ROBO1; this inhibits the interaction with RHOA and the stimulation of RHOA GTPase activity, and thereby increases the levels of active RHOA. In terms of tissue distribution, expressed in testis, lung, thymus, brain, liver, spleen and heart muscle. Detected in lung, testis, spleen and liver, and at reduced level in different brain regions (at protein level).

It is found in the cytoplasm. The protein localises to the cell cortex. The protein resides in the perinuclear region. Its subcellular location is the cytoskeleton. Functionally, myosins are actin-based motor molecules with ATPase activity. Unconventional myosins serve in intracellular movements. Binds actin with high affinity both in the absence and presence of ATP and its mechanochemical activity is inhibited by calcium ions. Also acts as a GTPase activator for RHOA. Plays a role in the regulation of cell migration via its role as RHOA GTPase activator. This is regulated by its interaction with the SLIT2 receptor ROBO1; interaction with ROBO1 impairs interaction with RHOA and subsequent activation of RHOA GTPase activity, and thereby leads to increased levels of active, GTP-bound RHOA. The sequence is that of Unconventional myosin-IXb (Myo9b) from Rattus norvegicus (Rat).